Reading from the N-terminus, the 333-residue chain is Mitochondrial 2-oxoglutarate/malate carrier protein (333 aa).

3 Solcar repeats span residues 29–127 (FRLI…LFER), 136–227 (PGFL…SKQF), and 236–325 (DNIL…MNKA). A run of 6 helical transmembrane segments spans residues 30–61 (RLIA…VQPL), 102–120 (GLSA…RLGI), 138–159 (FLLK…GTPA), 202–221 (GCIP…LASY), 241–259 (HFCA…SMPV), and 300–319 (GFTP…FIFL).

The protein belongs to the mitochondrial carrier (TC 2.A.29) family. Interacts with SMIM26.

It localises to the membrane. It catalyses the reaction (S)-malate(in) + 2-oxoglutarate(out) = (S)-malate(out) + 2-oxoglutarate(in). It carries out the reaction malonate(in) + 2-oxoglutarate(out) = malonate(out) + 2-oxoglutarate(in). The enzyme catalyses succinate(in) + 2-oxoglutarate(out) = succinate(out) + 2-oxoglutarate(in). The catalysed reaction is maleate(in) + 2-oxoglutarate(out) = maleate(out) + 2-oxoglutarate(in). It catalyses the reaction oxaloacetate(in) + 2-oxoglutarate(out) = oxaloacetate(out) + 2-oxoglutarate(in). Its function is as follows. Catalyzes the transport of 2-oxoglutarate (alpha-oxoglutarate) across the inner mitochondrial membrane in an electroneutral exchange for malate. Can also exchange 2-oxoglutarate for other dicarboxylic acids such as malonate, succinate, maleate and oxaloacetate, although with lower affinity. Contributes to several metabolic processes, including the malate-aspartate shuttle, the oxoglutarate/isocitrate shuttle, in gluconeogenesis from lactate, and in nitrogen metabolism. Maintains mitochondrial fusion and fission events, and the organization and morphology of cristae. Involved in the regulation of apoptosis. Helps protect from cytotoxic-induced apoptosis by modulating glutathione levels in mitochondria. The chain is Mitochondrial 2-oxoglutarate/malate carrier protein (SLC25A11) from Sus scrofa (Pig).